Reading from the N-terminus, the 508-residue chain is Putative POTE ankyrin domain family member M (508 aa).

ANK repeat units follow at residues 172–201 (QKRT…QLNI), 205–234 (KKRT…DPNI), 238–267 (YGNT…DIES), 271–300 (HGLT…NLNA), and 304–333 (YGRT…DVSS). The disordered stretch occupies residues 369–487 (SSENSNPEQD…KQLSEEQNTG (119 aa)). Basic and acidic residues-rich tracts occupy residues 377–392 (QDLK…RLKG) and 406–421 (EINK…EMKK). Residues 476-487 (TQKQLSEEQNTG) show a composition bias toward polar residues.

It belongs to the POTE family.

The sequence is that of Putative POTE ankyrin domain family member M (POTEM) from Homo sapiens (Human).